We begin with the raw amino-acid sequence, 218 residues long: tRNA (guanine-N(7)-)-methyltransferase (218 aa).

Residues 1-25 form a disordered region; that stretch reads MRLKNKPWANELVEEHPESALDRPN. A compositionally biased stretch (basic and acidic residues) spans 13–25; it reads VEEHPESALDRPN. The S-adenosyl-L-methionine site is built by Glu45, Glu70, Asp97, and Asp119. Asp119 is a catalytic residue. Residue Lys123 participates in substrate binding. The interval 125–130 is interaction with RNA; that stretch reads RHEKRR. Substrate-binding positions include Asp155 and 195 to 198; that span reads TEYE.

This sequence belongs to the class I-like SAM-binding methyltransferase superfamily. TrmB family.

It carries out the reaction guanosine(46) in tRNA + S-adenosyl-L-methionine = N(7)-methylguanosine(46) in tRNA + S-adenosyl-L-homocysteine. The protein operates within tRNA modification; N(7)-methylguanine-tRNA biosynthesis. Catalyzes the formation of N(7)-methylguanine at position 46 (m7G46) in tRNA. The chain is tRNA (guanine-N(7)-)-methyltransferase from Lactobacillus delbrueckii subsp. bulgaricus (strain ATCC BAA-365 / Lb-18).